The sequence spans 233 residues: Pirin-like protein YhaK (233 aa).

The protein belongs to the pirin family. In terms of assembly, monomer.

It localises to the cytoplasm. Functionally, does not have quercetin 2,3-dioxygenase activity. This Escherichia coli O157:H7 protein is Pirin-like protein YhaK (yhaK).